The primary structure comprises 135 residues: Small ribosomal subunit protein uS11 (135 aa).

It belongs to the universal ribosomal protein uS11 family. Part of the 30S ribosomal subunit. Interacts with proteins S7 and S18. Binds to IF-3.

Located on the platform of the 30S subunit, it bridges several disparate RNA helices of the 16S rRNA. Forms part of the Shine-Dalgarno cleft in the 70S ribosome. The polypeptide is Small ribosomal subunit protein uS11 (Polynucleobacter necessarius subsp. necessarius (strain STIR1)).